The primary structure comprises 367 residues: MRAAGPWRAASPAPCTRYLARCKPGFRPSSSFVVDLLVDSGDPGLEDVALTECLSPPSLSCSNSTLSLLSPLGHQSFPFGADDSEGEDEEALDEDARESESKVESLEGIEFQQRSSCEVESQDKQEKLVLLQHGSLTPWEMWFVGKEKEERGRLQQKFLEELNQQIEKRKEMEEREKRKIIAEVKHKEWVQKKNKQERKEREQKINKEMEEKEAKKREKEHLQEKAKEKYQEWLKKKKAEEYEKKKKEKEKEKQRQAELQEKKEIAEKKFKEWLENAKNKPRPAAKSYGYSSGKLTGFYSGNSYPEPTFYNPIPWKPIHMPPPKEAKSGPGKKSKRHAASQPLPSSSLAVHNAKSSLCLGALCRGQR.

Ser55 is subject to Phosphoserine. 3 disordered regions span residues 77–105 (FPFG…KVES), 191–228 (QKKN…KAKE), and 310–349 (YNPI…SSLA). Positions 82 to 97 (DDSEGEDEEALDEDAR) are enriched in acidic residues. 2 coiled-coil regions span residues 87 to 108 (EDEE…SLEG) and 153 to 280 (RLQQ…AKNK). A compositionally biased stretch (basic and acidic residues) spans 197–228 (ERKEREQKINKEMEEKEAKKREKEHLQEKAKE). Residues 339 to 349 (ASQPLPSSSLA) show a composition bias toward low complexity.

Expressed in testis and sperm.

The protein localises to the cell projection. It is found in the cilium. The protein resides in the flagellum. Functionally, involved in spermatogenesis. Has a probable role in anterograde intraflagellar transport which is essential for the formation of sperm flagella. This chain is Coiled-coil domain-containing protein 34 (Ccdc34), found in Mus musculus (Mouse).